Here is a 197-residue protein sequence, read N- to C-terminus: Nucleoid occlusion factor SlmA (197 aa).

In terms of domain architecture, HTH tetR-type spans 7 to 67 (INRREHILQC…GLIDFIEESL (61 aa)). The H-T-H motif DNA-binding region spans 30 to 49 (TTAKLAAEVGVSEAALYRHF).

The protein belongs to the nucleoid occlusion factor SlmA family. Homodimer. Interacts with FtsZ.

It is found in the cytoplasm. The protein resides in the nucleoid. Its function is as follows. Required for nucleoid occlusion (NO) phenomenon, which prevents Z-ring formation and cell division over the nucleoid. Acts as a DNA-associated cell division inhibitor that binds simultaneously chromosomal DNA and FtsZ, and disrupts the assembly of FtsZ polymers. SlmA-DNA-binding sequences (SBS) are dispersed on non-Ter regions of the chromosome, preventing FtsZ polymerization at these regions. The chain is Nucleoid occlusion factor SlmA from Shewanella woodyi (strain ATCC 51908 / MS32).